A 156-amino-acid polypeptide reads, in one-letter code: Cyanate hydratase (156 aa).

Residues R96, E99, and S122 contribute to the active site.

This sequence belongs to the cyanase family.

The catalysed reaction is cyanate + hydrogencarbonate + 3 H(+) = NH4(+) + 2 CO2. Catalyzes the reaction of cyanate with bicarbonate to produce ammonia and carbon dioxide. The protein is Cyanate hydratase of Burkholderia pseudomallei (strain 1106a).